The primary structure comprises 477 residues: Glycogen synthase (477 aa).

Lysine 15 serves as a coordination point for ADP-alpha-D-glucose.

It belongs to the glycosyltransferase 1 family. Bacterial/plant glycogen synthase subfamily.

It carries out the reaction [(1-&gt;4)-alpha-D-glucosyl](n) + ADP-alpha-D-glucose = [(1-&gt;4)-alpha-D-glucosyl](n+1) + ADP + H(+). The protein operates within glycan biosynthesis; glycogen biosynthesis. In terms of biological role, synthesizes alpha-1,4-glucan chains using ADP-glucose. This chain is Glycogen synthase, found in Salmonella choleraesuis (strain SC-B67).